The sequence spans 20 residues: Chrysophsin-3 (20 aa).

At H20 the chain carries Histidine amide.

Gill.

It localises to the secreted. In terms of biological role, has antibacterial activity against Gram-positive bacteria B.subtilis ATCC 6633, L.garvieae ATCC 49156 and S.iniae F-8502, and Gram-negative bacteria E.coli WT-2, V.anguillarum ATCC 19264, V.penaeicida KHA, V.harveyi ATCC 14126, V.vulnificus ATCC 33148, A.salmonicida NCMB 1102 and P.putida ATCC 12633. Has hemolytic activity against human red blood cells. Seems to disrupt the membranes by adopting an alpha helical conformation. May play a significant role in innate host defense. The polypeptide is Chrysophsin-3 (Pagrus major (Red sea bream)).